The chain runs to 284 residues: Acetylglutamate kinase (284 aa).

Substrate is bound by residues 66–67 (GG), arginine 88, and asparagine 179.

The protein belongs to the acetylglutamate kinase family. ArgB subfamily.

It is found in the cytoplasm. The enzyme catalyses N-acetyl-L-glutamate + ATP = N-acetyl-L-glutamyl 5-phosphate + ADP. It participates in amino-acid biosynthesis; L-arginine biosynthesis; N(2)-acetyl-L-ornithine from L-glutamate: step 2/4. Functionally, catalyzes the ATP-dependent phosphorylation of N-acetyl-L-glutamate. The sequence is that of Acetylglutamate kinase from Actinobacillus pleuropneumoniae serotype 7 (strain AP76).